The primary structure comprises 103 residues: Small ribosomal subunit protein uS10 (103 aa).

The protein belongs to the universal ribosomal protein uS10 family. Part of the 30S ribosomal subunit.

Its function is as follows. Involved in the binding of tRNA to the ribosomes. This is Small ribosomal subunit protein uS10 from Marinomonas sp. (strain MWYL1).